Consider the following 225-residue polypeptide: Ribonuclease 3 (225 aa).

In terms of domain architecture, RNase III spans 7–129 (IPRLCRTLGY…IIGAIYLDSD (123 aa)). Glu42 contributes to the Mg(2+) binding site. Residue Asp46 is part of the active site. The Mg(2+) site is built by Asp115 and Glu118. Glu118 is an active-site residue. The region spanning 155–225 (DPKTLLQEHL…AAQVLELIKK (71 aa)) is the DRBM domain.

It belongs to the ribonuclease III family. In terms of assembly, homodimer. It depends on Mg(2+) as a cofactor.

Its subcellular location is the cytoplasm. The enzyme catalyses Endonucleolytic cleavage to 5'-phosphomonoester.. Its function is as follows. Digests double-stranded RNA. Involved in the processing of primary rRNA transcript to yield the immediate precursors to the large and small rRNAs (23S and 16S). Processes some mRNAs, and tRNAs when they are encoded in the rRNA operon. Processes pre-crRNA and tracrRNA of type II CRISPR loci if present in the organism. In Shewanella piezotolerans (strain WP3 / JCM 13877), this protein is Ribonuclease 3.